The sequence spans 233 residues: Ras-related protein Rab-20 (233 aa).

Residues Gly-17, Lys-18, Thr-19, Asp-32, and Thr-36 each coordinate GTP. A Mg(2+)-binding site is contributed by Thr-19. 2 short sequence motifs (switch) span residues 28 to 41 and 55 to 72; these read RRFP…GGAF and DTAG…YCRG. Residues Thr-36 and Asp-55 each contribute to the Mg(2+) site. Residues Gly-58, Asn-113, Lys-114, and Asp-116 each contribute to the GTP site. Positions 119-130 are enriched in basic and acidic residues; the sequence is SERDTEGGEKEG. The segment at 119-138 is disordered; sequence SERDTEGGEKEGPASGKVGS. Residues Ala-183 and Lys-184 each contribute to the GTP site. Residues Cys-231 and Cys-232 are each lipidated (S-geranylgeranyl cysteine).

Belongs to the small GTPase superfamily. Rab family. Requires Mg(2+) as cofactor. In terms of tissue distribution, present in a variety of tissues, but not in brain.

Its subcellular location is the cytoplasmic vesicle. It localises to the phagosome. The protein resides in the phagosome membrane. It is found in the golgi apparatus. The enzyme catalyses GTP + H2O = GDP + phosphate + H(+). Its activity is regulated as follows. Regulated by guanine nucleotide exchange factors (GEFs) which promote the exchange of bound GDP for free GTP. Regulated by GTPase activating proteins (GAPs) which increase the GTP hydrolysis activity. Inhibited by GDP dissociation inhibitors (GDIs). Its function is as follows. Plays a role in apical endocytosis/recycling. Plays a role in the maturation and acidification of phagosomes that engulf pathogens, such as S.aureus and Mycobacterium. Plays a role in the fusion of phagosomes with lysosomes. The chain is Ras-related protein Rab-20 from Mus musculus (Mouse).